Here is a 574-residue protein sequence, read N- to C-terminus: Phenylalanine--tRNA ligase beta subunit (574 aa).

Residues 278-353 (LTPKEFEVEL…IAYGYNEIEP (76 aa)) enclose the B5 domain. 4 residues coordinate Mg(2+): Asp331, Asp337, Glu340, and Asp341.

The protein belongs to the phenylalanyl-tRNA synthetase beta subunit family. Type 2 subfamily. Tetramer of two alpha and two beta subunits. It depends on Mg(2+) as a cofactor.

It localises to the cytoplasm. The enzyme catalyses tRNA(Phe) + L-phenylalanine + ATP = L-phenylalanyl-tRNA(Phe) + AMP + diphosphate + H(+). The polypeptide is Phenylalanine--tRNA ligase beta subunit (Thermococcus kodakarensis (strain ATCC BAA-918 / JCM 12380 / KOD1) (Pyrococcus kodakaraensis (strain KOD1))).